The following is a 231-amino-acid chain: uncharacterized protein (231 aa).

A helical membrane pass occupies residues 10 to 30; sequence SQNIFFIAIVIFILSSVILYH.

It is found in the membrane. This is an uncharacterized protein from Rickettsia prowazekii (strain Madrid E).